Here is a 296-residue protein sequence, read N- to C-terminus: Nitrogenase iron protein 2 (296 aa).

An ATP-binding site is contributed by 11 to 18; the sequence is GKGGIGKS. C99 provides a ligand contact to [4Fe-4S] cluster. ADP-ribosylarginine; by dinitrogenase reductase ADP-ribosyltransferase is present on R102. Residue C133 coordinates [4Fe-4S] cluster.

Belongs to the NifH/BchL/ChlL family. Homodimer. Requires [4Fe-4S] cluster as cofactor. Post-translationally, the reversible ADP-ribosylation of Arg-102 inactivates the nitrogenase reductase and regulates nitrogenase activity.

It carries out the reaction N2 + 8 reduced [2Fe-2S]-[ferredoxin] + 16 ATP + 16 H2O = H2 + 8 oxidized [2Fe-2S]-[ferredoxin] + 2 NH4(+) + 16 ADP + 16 phosphate + 6 H(+). Functionally, the key enzymatic reactions in nitrogen fixation are catalyzed by the nitrogenase complex, which has 2 components: the iron protein and the molybdenum-iron protein. This is Nitrogenase iron protein 2 (nifH2) from Azorhizobium caulinodans (strain ATCC 43989 / DSM 5975 / JCM 20966 / LMG 6465 / NBRC 14845 / NCIMB 13405 / ORS 571).